The following is a 667-amino-acid chain: Protein OS-9 (667 aa).

Positions 1-25 are cleaved as a signal peptide; the sequence is MAAETLLSSLLGLLLLGLLLPASLT. Residues 108–230 form the MRH domain; that stretch reads APCLLKTKDW…TIRTPRLCPH (123 aa). Cysteine 110 and cysteine 123 form a disulfide bridge. Positions 117, 118, and 130 each coordinate a mannooligosaccharide derivative. Asparagine 177 carries an N-linked (GlcNAc...) asparagine glycan. Cystine bridges form between cysteine 181–cysteine 216 and cysteine 196–cysteine 228. A mannooligosaccharide derivative is bound by residues aspartate 182, arginine 188, glutamate 212, and tyrosine 218. 5 disordered regions span residues 284–355, 372–452, 464–483, 504–540, and 633–667; these read WSET…NNVQ, LKGG…RDRL, LENIIQETEKELDPDGLKKE, LEEKQSPELVKKHKKKRVVPKKPPPSPQPTEEDPEHR, and AQKERQRQKELESNYRRVWGSPGGEGTGDLDEFDF. 2 stretches are compositionally biased toward basic and acidic residues: residues 302-311 and 396-412; these read TKDDSKDSDF and PQREPEKERGDPERQRE. The span at 413-429 shows a compositional bias: acidic residues; the sequence is MEEEEDEDEDEDEDEDE. The segment covering 430–452 has biased composition (basic and acidic residues); that stretch reads RQLLGEFEKELEGILLPSDRDRL. Over residues 504-513 the composition is skewed to basic and acidic residues; sequence LEEKQSPELV. A compositionally biased stretch (basic residues) spans 514 to 523; it reads KKHKKKRVVP. Residues 633 to 647 are compositionally biased toward basic and acidic residues; it reads AQKERQRQKELESNY.

This sequence belongs to the OS-9 family. In terms of assembly, component of the HRD1 complex, which comprises at least SYNV1/HRD1, DERL1/2, FAM8A1, HERPUD1/HERP, OS9, SEL1L and UBE2J1. FAM8A1 is stabilized by interaction with SYNV1, which prevents its proteasomal degradation. OS9 and UBE2J1 recruitment to the complex may be mediated by SEL1L. Through this complex, may interact with ERLEC1 and HSPA5. Interacts (via C-terminus) with CPNE6 (via second C2 domain); this interaction occurs in a calcium-dependent manner in vitro. Interacts with CREB3. Post-translationally, intramolecular disulfide bonds. In terms of processing, isoform 1 and isoform 2 are N-glycosylated. As to expression, ubiquitously expressed. Found as well in all tumor cell lines analyzed, amplified in sarcomas. Highly expressed in osteosarcoma SJSA-1 and rhabdomyosarcoma Rh30 cell lines. In terms of tissue distribution, isoform 2 is the major isoform detected in all cell types examined.

The protein resides in the endoplasmic reticulum lumen. Lectin component of the HRD1 complex, which functions in endoplasmic reticulum (ER) quality control and ER-associated degradation (ERAD). Specifically recognizes and binds improperly folded glycoproteins as well as hyperglycosylated proteins, retain them in the ER, and transfers them to the ubiquitination machinery and promote their degradation. Possible targets include TRPV4 as well as hyperglycosylated HSP90B1. The protein is Protein OS-9 (OS9) of Homo sapiens (Human).